The chain runs to 467 residues: UDP-N-acetylmuramate--L-alanine ligase (467 aa).

114-120 is a binding site for ATP; the sequence is GTHGKTT.

It belongs to the MurCDEF family.

The protein resides in the cytoplasm. It carries out the reaction UDP-N-acetyl-alpha-D-muramate + L-alanine + ATP = UDP-N-acetyl-alpha-D-muramoyl-L-alanine + ADP + phosphate + H(+). The protein operates within cell wall biogenesis; peptidoglycan biosynthesis. In terms of biological role, cell wall formation. This chain is UDP-N-acetylmuramate--L-alanine ligase, found in Nitrobacter winogradskyi (strain ATCC 25391 / DSM 10237 / CIP 104748 / NCIMB 11846 / Nb-255).